The primary structure comprises 442 residues: MEQPNTKPVAPATSRNAALFERAQKLIPGGVNSPVRAFKAVGGTPRFIQRAQGAYFWDADGQRYIDYIGSWGPMILGHGHPAVVEAVQKAVLEGFSYGAPTEREVELAEEIVKLVPSIEMVRLVSSGTEATMSVIRLARGATGRSKIIKFEGCYHGHSDALLVKAGSGLATFGSPTSAGVPPEVVQHTLVLEYNHIAQLEEAFSLHGRDIACLMIEPIAGNMNFVRASVPFIKRCRELCTQYDALLVFDEVMTGFRVALGGAQSVYAQSIPGFKPDITALGKVIGGGMPMAAFGGTRAVMEHLAPLGGVYQAGTLSGNPVATACGLATLREIQKPGFYDALGARTRSLVEGLTHAANQAGVPFCGDSEGGMFGFFLLGTLPQNYPQVMKTDSPTFNRFFHAMLDSGVYYAPALYEAGFVSAAHTAEDIEATVEAATRFFAGR.

At Lys282 the chain carries N6-(pyridoxal phosphate)lysine.

It belongs to the class-III pyridoxal-phosphate-dependent aminotransferase family. HemL subfamily. In terms of assembly, homodimer. Pyridoxal 5'-phosphate serves as cofactor.

Its subcellular location is the cytoplasm. The catalysed reaction is (S)-4-amino-5-oxopentanoate = 5-aminolevulinate. Its pathway is porphyrin-containing compound metabolism; protoporphyrin-IX biosynthesis; 5-aminolevulinate from L-glutamyl-tRNA(Glu): step 2/2. The protein is Glutamate-1-semialdehyde 2,1-aminomutase of Polaromonas naphthalenivorans (strain CJ2).